Consider the following 466-residue polypeptide: Asparagine--tRNA ligase (466 aa).

It belongs to the class-II aminoacyl-tRNA synthetase family. Homodimer.

The protein resides in the cytoplasm. It catalyses the reaction tRNA(Asn) + L-asparagine + ATP = L-asparaginyl-tRNA(Asn) + AMP + diphosphate + H(+). This chain is Asparagine--tRNA ligase, found in Enterobacter sp. (strain 638).